The sequence spans 133 residues: Putative biopolymer transport protein ExbD-like 1 (133 aa).

The Cytoplasmic portion of the chain corresponds to 1–15 (MNYDNYWDEDKPELN). A helical transmembrane segment spans residues 16–32 (ITPLVDVMLVLLAILMV). The Periplasmic segment spans residues 33-133 (TTPTLTYKEE…FLKVSLITSP (101 aa)).

Belongs to the ExbD/TolR family.

It is found in the cell inner membrane. This is Putative biopolymer transport protein ExbD-like 1 from Helicobacter pylori (strain J99 / ATCC 700824) (Campylobacter pylori J99).